The chain runs to 534 residues: Ankyrin repeat domain-containing protein 34C (534 aa).

ANK repeat units lie at residues 10–39, 43–80, 84–114, and 118–147; these read TDGN…YINE, KGET…DPNI, SGKT…DPSL, and TGAS…AKGK. Residues 159 to 205 form a disordered region; it reads SGTKTTKQYLNVPPSPKVEDRQSPPLCTTPSDVELKTSGLASPPSEK. At Ser301 the chain carries Phosphoserine. Disordered stretches follow at residues 332–368 and 384–403; these read YEKG…LKDP and QPVG…GPLD. Phosphoserine is present on Ser446. The tract at residues 480-503 is disordered; sequence SKPASPLASGLKSMAPVAPNSPKR.

It belongs to the ANKRD34 family.

This is Ankyrin repeat domain-containing protein 34C (Ankrd34c) from Mus musculus (Mouse).